A 494-amino-acid polypeptide reads, in one-letter code: MTTDPDPPFVSIWDNVVTELNGAGEVGNGSLTPQQRAWLKLVKPLVITEGFALLSVPTPFVQNEIERHLREPIVAALSRQLGQRVELGVRIADPVSDESDSGSVASPAPVAAADPDDDVVDDDLAARASAEESWPSYFTNRANRAAEDDATSVNLNRRYTFDTFVIGASNRFAHAASLAIAEAPARAYNPLFIWGESGLGKTHLLHAAGNYAQRLFPGMRVKYVSTEEFTNDFINSLRDDRRASFKRTYRDIDVLLVDDIQFIEGKDGIQEEFFHTFNTLHNANKQIVISSDRPPKQLATLEDRLRTRFEWGLITDVQPPELETRIAILRKKAQMDRLDVPGDVLELIASRIERNIRELEGALIRVTAFASLNKTPIDKSLAEIVLRDLISDSSTMQISTAAIMAATAEYFETSVEELRGPGKTRALAQSRQIAMYLCRELTDLSLPKIGQAFGRDHTTVMYAEKKIRAEMAERREVFDHVKELTTRIRQRAKR.

The interval 1-103 is domain I, interacts with DnaA modulators; the sequence is MTTDPDPPFV…PVSDESDSGS (103 aa). The interval 94–117 is disordered; sequence PVSDESDSGSVASPAPVAAADPDD. Positions 101-113 are enriched in low complexity; it reads SGSVASPAPVAAA. Residues 104 to 153 form a domain II region; the sequence is VASPAPVAAADPDDDVVDDDLAARASAEESWPSYFTNRANRAAEDDATSV. Positions 154–370 are domain III, AAA+ region; sequence NLNRRYTFDT…GALIRVTAFA (217 aa). The ATP site is built by glycine 198, glycine 200, lysine 201, and threonine 202. The interval 371-494 is domain IV, binds dsDNA; it reads SLNKTPIDKS…TTRIRQRAKR (124 aa).

Belongs to the DnaA family. As to quaternary structure, oligomerizes as a right-handed, spiral filament on DNA at oriC.

It is found in the cytoplasm. Its function is as follows. Plays an essential role in the initiation and regulation of chromosomal replication. ATP-DnaA binds to the origin of replication (oriC) to initiate formation of the DNA replication initiation complex once per cell cycle. Binds the DnaA box (a 9 base pair repeat at the origin) and separates the double-stranded (ds)DNA. Forms a right-handed helical filament on oriC DNA; dsDNA binds to the exterior of the filament while single-stranded (ss)DNA is stabiized in the filament's interior. The ATP-DnaA-oriC complex binds and stabilizes one strand of the AT-rich DNA unwinding element (DUE), permitting loading of DNA polymerase. After initiation quickly degrades to an ADP-DnaA complex that is not apt for DNA replication. Binds acidic phospholipids. The protein is Chromosomal replication initiator protein DnaA of Mycolicibacterium vanbaalenii (strain DSM 7251 / JCM 13017 / BCRC 16820 / KCTC 9966 / NRRL B-24157 / PYR-1) (Mycobacterium vanbaalenii).